A 254-amino-acid chain; its full sequence is MSQISPLYYGIIPARYGSSRLPGKPLIDIWGKPMFWYVYQNAVESNIFRSVVLATDSEEIAESAHQLSIPYVMTSVEHISGTDRVYEAAIKMNIEPDSVVVNIQGDEPLVKPEAIQQLVEPFIDVSIQVTTLSTRITANQAMLPHQVKVVVSSNGDALYFSRAAIPYLRDNDTDGYYLGHIGLYAFRMHTLDKFVHLPPSQLEQFEKLEQLRLLENNIPIRVVNTNHTSQGVDTVEDLEIVQGLLAQRMEAVSR.

The protein belongs to the KdsB family.

It localises to the cytoplasm. It carries out the reaction 3-deoxy-alpha-D-manno-oct-2-ulosonate + CTP = CMP-3-deoxy-beta-D-manno-octulosonate + diphosphate. It functions in the pathway nucleotide-sugar biosynthesis; CMP-3-deoxy-D-manno-octulosonate biosynthesis; CMP-3-deoxy-D-manno-octulosonate from 3-deoxy-D-manno-octulosonate and CTP: step 1/1. Functionally, activates KDO (a required 8-carbon sugar) for incorporation into bacterial lipopolysaccharide in Gram-negative bacteria. The polypeptide is 3-deoxy-manno-octulosonate cytidylyltransferase (Lawsonia intracellularis (strain PHE/MN1-00)).